Reading from the N-terminus, the 80-residue chain is Small ribosomal subunit protein bS16 (80 aa).

It belongs to the bacterial ribosomal protein bS16 family.

The sequence is that of Small ribosomal subunit protein bS16 from Nitrosococcus oceani (strain ATCC 19707 / BCRC 17464 / JCM 30415 / NCIMB 11848 / C-107).